Reading from the N-terminus, the 406-residue chain is Phosphopentomutase (406 aa).

The Mn(2+) site is built by Asp10, Asp305, His310, Asp346, His347, and His358.

The protein belongs to the phosphopentomutase family. Requires Mn(2+) as cofactor.

The protein resides in the cytoplasm. The enzyme catalyses 2-deoxy-alpha-D-ribose 1-phosphate = 2-deoxy-D-ribose 5-phosphate. It catalyses the reaction alpha-D-ribose 1-phosphate = D-ribose 5-phosphate. Its pathway is carbohydrate degradation; 2-deoxy-D-ribose 1-phosphate degradation; D-glyceraldehyde 3-phosphate and acetaldehyde from 2-deoxy-alpha-D-ribose 1-phosphate: step 1/2. Isomerase that catalyzes the conversion of deoxy-ribose 1-phosphate (dRib-1-P) and ribose 1-phosphate (Rib-1-P) to deoxy-ribose 5-phosphate (dRib-5-P) and ribose 5-phosphate (Rib-5-P), respectively. This is Phosphopentomutase from Rhizobium leguminosarum bv. trifolii (strain WSM2304).